The primary structure comprises 629 residues: 1-deoxy-D-xylulose-5-phosphate synthase (629 aa).

Residues His-72 and 113-115 (GHA) contribute to the thiamine diphosphate site. Asp-144 contributes to the Mg(2+) binding site. Thiamine diphosphate contacts are provided by residues 145–146 (GA), Asn-174, Tyr-287, and Glu-370. Residue Asn-174 participates in Mg(2+) binding.

This sequence belongs to the transketolase family. DXPS subfamily. Homodimer. Requires Mg(2+) as cofactor. It depends on thiamine diphosphate as a cofactor.

The catalysed reaction is D-glyceraldehyde 3-phosphate + pyruvate + H(+) = 1-deoxy-D-xylulose 5-phosphate + CO2. Its pathway is metabolic intermediate biosynthesis; 1-deoxy-D-xylulose 5-phosphate biosynthesis; 1-deoxy-D-xylulose 5-phosphate from D-glyceraldehyde 3-phosphate and pyruvate: step 1/1. Catalyzes the acyloin condensation reaction between C atoms 2 and 3 of pyruvate and glyceraldehyde 3-phosphate to yield 1-deoxy-D-xylulose-5-phosphate (DXP). This chain is 1-deoxy-D-xylulose-5-phosphate synthase, found in Prochlorococcus marinus (strain MIT 9312).